We begin with the raw amino-acid sequence, 89 residues long: HssA/B-like protein DDB_G0295685 (89 aa).

It belongs to the hssA/B family.

This is HssA/B-like protein DDB_G0295685 from Dictyostelium discoideum (Social amoeba).